Consider the following 131-residue polypeptide: UPF0134 protein MPN_010 (131 aa).

Belongs to the UPF0134 family.

The polypeptide is UPF0134 protein MPN_010 (Mycoplasma pneumoniae (strain ATCC 29342 / M129 / Subtype 1) (Mycoplasmoides pneumoniae)).